Consider the following 695-residue polypeptide: Variediene synthase (695 aa).

The disordered stretch occupies residues 1–23; that stretch reads MVPTSLSPDDTSDPVPRSSSDIQ. Positions 7-332 are terpene cyclase; sequence SPDDTSDPVP…PRYHPWLCEE (326 aa). Residue D98 coordinates Mg(2+). Substrate-binding positions include D98, 184-187, N228, 232-236, and 324-325; these read RIID, SFDIE, and RY. The DDXXD 1 motif lies at 98–102; the sequence is DNVVE. The NSE/DTE motif lies at 228–236; it reads NDYFSFDIE. The segment at 353-392 is disordered; it reads RRSISGDSISSESSVWSGASDRSARSSVSSAPSLDEGKEP. Residues 357-385 show a composition bias toward low complexity; that stretch reads SGDSISSESSVWSGASDRSARSSVSSAPS. Positions 415, 418, and 447 each coordinate isopentenyl diphosphate. 2 residues coordinate Mg(2+): D454 and D458. The short motif at 454-458 is the DDXXD 2 element; sequence DDIED. Residue R463 coordinates dimethylallyl diphosphate. R464 contributes to the isopentenyl diphosphate binding site. Dimethylallyl diphosphate contacts are provided by K541, T542, Q579, N586, K595, and K605.

The protein in the N-terminal section; belongs to the terpene synthase family. It in the C-terminal section; belongs to the FPP/GGPP synthase family. Hexamer. The cofactor is Mg(2+).

The enzyme catalyses isopentenyl diphosphate + (2E,6E)-farnesyl diphosphate = (2E,6E,10E)-geranylgeranyl diphosphate + diphosphate. The catalysed reaction is (2E,6E,10E)-geranylgeranyl diphosphate = variediene + diphosphate. The protein operates within secondary metabolite biosynthesis; terpenoid biosynthesis. Bifunctional terpene synthase converts DMAPP and IPP, and also GGPP, into variediene as a single product. The C-terminal prenyltransferase domain of AbVS catalyzes formation of GGPP, whereas the N-terminal terpene cyclase domain catalyzes the cyclization of GGPP to variediene. The chain is Variediene synthase from Aspergillus brasiliensis (strain CBS 101740 / IMI 381727 / IBT 21946).